The sequence spans 184 residues: Dynactin subunit 6 (184 aa).

It belongs to the dynactin subunits 5/6 family. Dynactin subunit 6 subfamily. Subunit of dynactin, a multiprotein complex part of a tripartite complex with dynein and a adapter, such as BICDL1, BICD2 or HOOK3. The dynactin complex is built around ACTR1A/ACTB filament and consists of an actin-related filament composed of a shoulder domain, a pointed end and a barbed end.

The protein resides in the cytoplasm. It localises to the cytoskeleton. Functionally, part of the dynactin complex that activates the molecular motor dynein for ultra-processive transport along microtubules. The polypeptide is Dynactin subunit 6 (dctn6) (Nematostella vectensis (Starlet sea anemone)).